Reading from the N-terminus, the 606-residue chain is Transmembrane 9 superfamily member 1 (606 aa).

An N-terminal signal peptide occupies residues 1–27 (MTVLGYPRSWSCHCLPVLILLLGIGHG). N178 is a glycosylation site (N-linked (GlcNAc...) asparagine). 4 consecutive transmembrane segments (helical) span residues 237–257 (LSII…AVIL), 310–330 (VLGV…MALL), 339–359 (GAIN…SGYV), and 373–393 (VWNI…TWSV). N-linked (GlcNAc...) asparagine glycosylation is present at N401. Helical transmembrane passes span 412-432 (ILLL…IGGI), 469-489 (VGGF…FATV), 499-519 (GILF…SIAL), and 535-555 (SVLS…FYYA). The N-linked (GlcNAc...) asparagine glycan is linked to N559. Residues 570-590 (FGYSLLTGYVFFLMLGTISFF) form a helical membrane-spanning segment.

The protein belongs to the nonaspanin (TM9SF) (TC 9.A.2) family.

The protein localises to the lysosome membrane. It localises to the cytoplasmic vesicle. Its subcellular location is the autophagosome membrane. In terms of biological role, plays an essential role in autophagy. This chain is Transmembrane 9 superfamily member 1 (Tm9sf1), found in Mus musculus (Mouse).